Here is a 1392-residue protein sequence, read N- to C-terminus: MAPGRKRGASKAKAKGQLVLGDLVLAKVKGFPAWPAKISRPEDWDRAPDPKKYFVQFFGTEEIAFVAPPDIQAFTSEAKSKLLARCQGKTVKYFAQAVEQICTAFEGLQNHKSNALGDEDSLDATEPGLTKAEIVDGTDHIVIESERTDNFNFRVDPCFPKLDENNGEERKAEIRKLDSSSFLESKVKTTSPVSESLEHSSFDPKIKKEDFDKGTDGSACNEHFGNGQKKLANGKRIKKEAGGSDRKGEDTVHRDKSNNSHVPGGRTASGNSDSKKSKGLLTEKTSSKVSADKHENSPGIKVGVSGKKRRLESEQGKLAPRVDESSRAAKKPRCESADNKVKCEIDDGSDSTGTVSDIKREIVLGLGARGGNFQYDKEAVAYTKRQRQTMEHATSPSFSGSRDKSGKGHLEQKDRSSPVRNVKAPAAQSLKKRRAVCIYDEDDDEDPKTPLHGKPAIVPQAASVLTDGPKRANVCHSTSTKAKISAGSTESTEVRKFPLRKHCEDASRVLPSNAENSTNSLPVVKPINELPPKDVKQILQSPKMSPQLVLTNKHVAGQHKVVKSSVKVSGVVMAKKPQSDSCKEAVAGSDKISSSQSQPANQRHKSASVGERLTVVSKAASRLNDSGSRDMSEDLSAAMLDLNREKGSATFTSAKTPDSAASMKDLIAAAQAKRKLAHTQNSIFGNLNPSFLSISDTQGRSHSPFMVQNASASAAISMPLVVQGHHQQGSSPSNHGHQSLSRNQIETDDNEERRLSSGHKSVGGSLSCSTEAAISRDAFEGMLETLSRTRESIGRATRLAIDCAKYGLASEVVELLIRKLESESHFHRKVDLFFLVDSITQHSHSQKGIAGASYVPTVQAALPRLLGAAAPPGTGASDNRRKCLKVLKLWLERKVFPESLLRRYIDDIRASGDDATGGFSLRRPSRSERAVDDPIREMEGMLVDEYGSNATFQLPGFFSSHNFEDDEEDDDLPTSQKEKSTSAGERVSALDDLEIHDTSSDKCHRVLEDVDHELEMEDVSGQRKDVAPSSFCENKTKEQSLDVMEPVAEKSTEFNPLPEDSPPLPQESPPPLPPLPPSPPPPSPPLPPSSLPPPPPAALFPPLPPPPSQPPPPPLSPPPSPPPPPPPPSQSLTTQLSIASHHQIPFQPGFPPPTYPLSHQTYPGSMQQDRSSIFTGDQIVQGPGNSSRGGLVEGAGKPEYFVQQSSSFSPAGVCSSREPSSFTSSRQLEFGNSDVLFNPEASSQNHRFQPSTPLSQRPMVRLPSAPSSHFSYPSHIQSQSQHSYTHPYPFPPQRDDARRYRNEEPWRIPSSGHSAENQNGAWIHGRNSHPGLPRVTDSFFRPPPERPPSGTMNYQPSAASNLQAVPAIPGHTAPQMLPSRPDIPTVNCWRPA.

Residues 20–77 (LGDLVLAKVKGFPAWPAKISRPEDWDRAPDPKKYFVQFFGTEEIAFVAPPDIQAFTSE) enclose the PWWP domain. A compositionally biased stretch (polar residues) spans 184-194 (ESKVKTTSPVS). Disordered stretches follow at residues 184–354 (ESKV…STGT), 384–428 (KRQR…PAAQ), 575–613 (KKPQ…GERL), and 723–766 (QGHH…GGSL). Composition is skewed to basic and acidic residues over residues 196–215 (SLEH…DKGT), 239–258 (KEAG…DKSN), and 311–345 (LESE…KCEI). Polar residues predominate over residues 391-400 (EHATSPSFSG). The span at 401–417 (SRDKSGKGHLEQKDRSS) shows a compositional bias: basic and acidic residues. 2 stretches are compositionally biased toward polar residues: residues 591-601 (KISSSQSQPAN) and 725-744 (HHQQ…SRNQ). A CID domain is found at 771–912 (EAAISRDAFE…RYIDDIRASG (142 aa)). Disordered stretches follow at residues 957–986 (FFSS…AGER), 1014–1356 (LEME…NYQP), and 1369–1392 (PGHT…WRPA). A compositionally biased stretch (pro residues) spans 1059 to 1129 (EDSPPLPQES…SPPPPPPPPS (71 aa)). Residues 1157-1175 (LSHQTYPGSMQQDRSSIFT) show a composition bias toward polar residues. Over residues 1215–1225 (SSREPSSFTSS) the composition is skewed to low complexity. 2 stretches are compositionally biased toward polar residues: residues 1240–1255 (EASS…TPLS) and 1265–1284 (APSS…QHSY). Over residues 1293 to 1306 (QRDDARRYRNEEPW) the composition is skewed to basic and acidic residues. Over residues 1311–1320 (SGHSAENQNG) the composition is skewed to polar residues.

As to expression, expressed in the inflorescence meristem, floral primordia, inflorescence stem, and floral pedicels. Also detected in the shoot apical meristem, stems, leaves, embryos, and roots.

It localises to the nucleus. Transcription factor that functions as a repressor of flowering by enhancing the expression of several genes that delay flowering including FLC, FLM/MAF1, MAF2 and SVP. Also acts in the floral homeotic AGAMOUS (AG) pathway, specifically by processing the AGAMOUS pre-mRNA. Functions in association with HUA1 and HEN4 in AG pre-mRNA processing. Involved in all three aspects of the AG functions, the specification of stamen and carpel identities, the control of floral determinacy, and the spatial restriction of AP1 expression. Acts as a transcription regulator that controls anthocyanin accumulation. The polypeptide is ENHANCER OF AG-4 protein 2 (Arabidopsis thaliana (Mouse-ear cress)).